The chain runs to 670 residues: NADH-ubiquinone oxidoreductase chain 5 (670 aa).

The next 19 helical transmembrane spans lie at Met-1 to His-21, Ile-31 to Leu-51, Leu-81 to Met-101, Thr-111 to Asp-131, Phe-133 to Phe-153, Leu-178 to Phe-198, Leu-211 to Val-231, Thr-251 to Leu-271, Ile-283 to Ile-303, Val-311 to Asn-331, Leu-339 to Gly-359, Leu-375 to Phe-395, Ala-421 to Leu-441, Thr-462 to Thr-482, Leu-519 to Ile-539, Phe-566 to Met-586, Leu-594 to Leu-614, Ile-629 to Ile-649, and Tyr-650 to Asp-670.

This sequence belongs to the complex I subunit 5 family.

Its subcellular location is the mitochondrion inner membrane. The enzyme catalyses a ubiquinone + NADH + 5 H(+)(in) = a ubiquinol + NAD(+) + 4 H(+)(out). Its function is as follows. Core subunit of the mitochondrial membrane respiratory chain NADH dehydrogenase (Complex I) that is believed to belong to the minimal assembly required for catalysis. Complex I functions in the transfer of electrons from NADH to the respiratory chain. The immediate electron acceptor for the enzyme is believed to be ubiquinone. This Dictyostelium discoideum (Social amoeba) protein is NADH-ubiquinone oxidoreductase chain 5 (nad5).